The chain runs to 425 residues: Serine--tRNA ligase (425 aa).

231 to 233 (TAE) is a binding site for L-serine. ATP is bound at residue 262 to 264 (RSE). Residue glutamate 285 coordinates L-serine. 349 to 352 (EISS) contacts ATP. An L-serine-binding site is contributed by serine 385.

This sequence belongs to the class-II aminoacyl-tRNA synthetase family. Type-1 seryl-tRNA synthetase subfamily. In terms of assembly, homodimer. The tRNA molecule binds across the dimer.

Its subcellular location is the cytoplasm. It catalyses the reaction tRNA(Ser) + L-serine + ATP = L-seryl-tRNA(Ser) + AMP + diphosphate + H(+). The catalysed reaction is tRNA(Sec) + L-serine + ATP = L-seryl-tRNA(Sec) + AMP + diphosphate + H(+). Its pathway is aminoacyl-tRNA biosynthesis; selenocysteinyl-tRNA(Sec) biosynthesis; L-seryl-tRNA(Sec) from L-serine and tRNA(Sec): step 1/1. Catalyzes the attachment of serine to tRNA(Ser). Is also able to aminoacylate tRNA(Sec) with serine, to form the misacylated tRNA L-seryl-tRNA(Sec), which will be further converted into selenocysteinyl-tRNA(Sec). The sequence is that of Serine--tRNA ligase from Bartonella henselae (strain ATCC 49882 / DSM 28221 / CCUG 30454 / Houston 1) (Rochalimaea henselae).